The sequence spans 332 residues: Malate dehydrogenase, cytoplasmic (332 aa).

Residues 16–17 (QI), Asp43, and Gly90 each bind NAD(+). Arg99 is an oxaloacetate binding site. NAD(+) is bound by residues Gln113 and Asn132. Oxaloacetate contacts are provided by Asn132, Arg163, His188, and Ser243. Residue His188 is the Proton acceptor of the active site.

Belongs to the LDH/MDH superfamily. MDH type 2 family. In terms of assembly, monomer. Expressed constitutively in roots.

The protein resides in the cell membrane. It carries out the reaction (S)-malate + NAD(+) = oxaloacetate + NADH + H(+). Functionally, malate dehydrogenase; catalyzes a reversible NAD-dependent dehydrogenase reaction involved in central metabolism and redox homeostasis. This Zea mays (Maize) protein is Malate dehydrogenase, cytoplasmic.